The sequence spans 423 residues: UPF0229 protein PST_0721 (423 aa).

The interval 84–109 is disordered; that stretch reads AGERIPRPQGGGGGQGAGQASNSGEG.

Belongs to the UPF0229 family.

This chain is UPF0229 protein PST_0721, found in Stutzerimonas stutzeri (strain A1501) (Pseudomonas stutzeri).